Reading from the N-terminus, the 750-residue chain is Photosystem I P700 chlorophyll a apoprotein A1 (750 aa).

A run of 8 helical transmembrane segments spans residues 72–95 (VFSA…FHGA), 158–181 (LYTT…FHYH), 197–221 (MNHH…HVSL), 293–311 (TVHH…GHMY), 348–371 (WHAQ…HHMY), 387–413 (LSLF…IFMV), 435–457 (AIIS…LYIH), and 532–550 (FLVH…LILL). Positions 574 and 583 each coordinate [4Fe-4S] cluster. 2 consecutive transmembrane segments (helical) span residues 590–611 (HVFL…HFSW) and 664–686 (LSAY…MFLF). A chlorophyll a'-binding site is contributed by His-675. Chlorophyll a is bound by residues Met-683 and Tyr-691. Trp-692 is a phylloquinone binding site. A helical transmembrane segment spans residues 724–744 (AVGVAHYLLGGIATTWAFFLA).

Belongs to the PsaA/PsaB family. In terms of assembly, the PsaA/B heterodimer binds the P700 chlorophyll special pair and subsequent electron acceptors. PSI consists of a core antenna complex that captures photons, and an electron transfer chain that converts photonic excitation into a charge separation. The eukaryotic PSI reaction center is composed of at least 11 subunits. P700 is a chlorophyll a/chlorophyll a' dimer, A0 is one or more chlorophyll a, A1 is one or both phylloquinones and FX is a shared 4Fe-4S iron-sulfur center. serves as cofactor.

The protein resides in the plastid. It is found in the chloroplast thylakoid membrane. It carries out the reaction reduced [plastocyanin] + hnu + oxidized [2Fe-2S]-[ferredoxin] = oxidized [plastocyanin] + reduced [2Fe-2S]-[ferredoxin]. In terms of biological role, psaA and PsaB bind P700, the primary electron donor of photosystem I (PSI), as well as the electron acceptors A0, A1 and FX. PSI is a plastocyanin-ferredoxin oxidoreductase, converting photonic excitation into a charge separation, which transfers an electron from the donor P700 chlorophyll pair to the spectroscopically characterized acceptors A0, A1, FX, FA and FB in turn. Oxidized P700 is reduced on the lumenal side of the thylakoid membrane by plastocyanin. This chain is Photosystem I P700 chlorophyll a apoprotein A1, found in Mesostigma viride (Green alga).